The sequence spans 566 residues: Sorting nexin lst-4 (566 aa).

Residues 1–61 (MAQVKAEYDF…PESYVTPYQA (61 aa)) enclose the SH3 domain. Residues 59 to 179 (YQASRPPPVL…DRGSNKVNKN (121 aa)) are disordered. Positions 63–77 (RPPPVLPPPLPPTSS) are enriched in pro residues. Residues 127 to 140 (DDFDDEWTDEDDEQ) show a composition bias toward acidic residues. Over residues 143-154 (TRPNVQSSIGSN) the composition is skewed to polar residues. Basic and acidic residues predominate over residues 155 to 173 (SRRDLSRSHSEHGGPDRGS). The PX domain occupies 227–339 (YTCIVDKPKK…HFISCTDEKD (113 aa)). One can recognise a BAR domain in the interval 362-566 (TVPHQPLDPN…KLTSLAARYD (205 aa)).

Belongs to the sorting nexin family. As to quaternary structure, homodimer. Isoform d interacts (via SH3 domain) with dyn-1. As to expression, expressed in vulval precursor cells (VPCs) and apoptotic germ cells. Colocalizes with actin, dyn-1 and rab-5 in early phagosomes.

The protein resides in the cytoplasm. The protein localises to the cytoplasmic vesicle. It is found in the phagosome membrane. Functionally, involved in the signaling of vulval development by acting as a negative regulator of epidermal growth factor receptor (EGFR) signaling. Aids in phagosomal membrane tubule formation which is required for phagosomal fusion with endosomes and lysosomes. Also recruits rab-7 to phagosomes by an interaction with dyn-1. These are events leading to phagosome maturation which is a step in apoptotic cell corpse clearance. Binds phosphatidylinositol-3,4,5-trisphosphate. In Caenorhabditis elegans, this protein is Sorting nexin lst-4.